Consider the following 470-residue polypeptide: Serine/threonine-protein kinase-like protein At1g28390 (470 aa).

Residues 52-333 (FSANNFLGKG…LEVVECLKTV (282 aa)) form the Protein kinase domain. Residues 58–66 (LGKGSHGRV) and Lys81 contribute to the ATP site. Residue Asp186 is the Proton acceptor of the active site. Residues Thr221 and Thr226 each carry the phosphothreonine modification. Tyr234 carries the post-translational modification Phosphotyrosine.

The protein belongs to the protein kinase superfamily. Ser/Thr protein kinase family.

The enzyme catalyses L-seryl-[protein] + ATP = O-phospho-L-seryl-[protein] + ADP + H(+). It catalyses the reaction L-threonyl-[protein] + ATP = O-phospho-L-threonyl-[protein] + ADP + H(+). The sequence is that of Serine/threonine-protein kinase-like protein At1g28390 from Arabidopsis thaliana (Mouse-ear cress).